The sequence spans 254 residues: Type III pantothenate kinase (254 aa).

Aspartate 7–lysine 14 is a binding site for ATP. Substrate-binding positions include tyrosine 97 and glycine 104–arginine 107. The active-site Proton acceptor is aspartate 106. ATP is bound at residue threonine 134. Threonine 184 contacts substrate.

The protein belongs to the type III pantothenate kinase family. As to quaternary structure, homodimer. It depends on NH4(+) as a cofactor. Requires K(+) as cofactor.

It is found in the cytoplasm. The catalysed reaction is (R)-pantothenate + ATP = (R)-4'-phosphopantothenate + ADP + H(+). It participates in cofactor biosynthesis; coenzyme A biosynthesis; CoA from (R)-pantothenate: step 1/5. Functionally, catalyzes the phosphorylation of pantothenate (Pan), the first step in CoA biosynthesis. The sequence is that of Type III pantothenate kinase from Methylibium petroleiphilum (strain ATCC BAA-1232 / LMG 22953 / PM1).